The sequence spans 1154 residues: Kinesin-like protein KIN-7E, chloroplastic (1154 aa).

Low complexity-rich tracts occupy residues 1 to 14 (MSSS…SISP) and 29 to 109 (VAAA…PPVA). The transit peptide at 1–21 (MSSSSRPGRASISPFRSRRTS) directs the protein to the chloroplast. The interval 1–109 (MSSSSRPGRA…RAAGRAPPVA (109 aa)) is disordered. In terms of domain architecture, Kinesin motor spans 119–437 (NIMVTVRFRP…LKFAHRSKHI (319 aa)). Position 199 to 206 (199 to 206 (GVTSSGKT)) interacts with ATP. The stretch at 441–523 (ASQNKIIDEK…AALMGRIQRL (83 aa)) forms a coiled coil. The tract at residues 620-674 (LSTSVDSESTASGSPSFSRSSQQKHPLLDLKDGRRKSMTRKGDDPALTDSFPGRT) is disordered. Positions 628–640 (STASGSPSFSRSS) are enriched in low complexity. Coiled coils occupy residues 734–761 (DSQI…LEQR) and 801–845 (ADNR…DNVA). The disordered stretch occupies residues 838–885 (AKNEDNVASMQSSEPSSTSSNPRDLANEVASHSKMPSRTTEDHTESPL). Low complexity predominate over residues 846 to 857 (SMQSSEPSSTSS). A coiled-coil region spans residues 894 to 967 (AEIENLKLDK…DLAAAKDQTR (74 aa)).

Belongs to the TRAFAC class myosin-kinesin ATPase superfamily. Kinesin family. KIN-7 subfamily.

The protein resides in the plastid. The protein localises to the chloroplast. This is Kinesin-like protein KIN-7E, chloroplastic from Oryza sativa subsp. japonica (Rice).